Consider the following 476-residue polypeptide: UDP-N-acetylmuramate--L-alanine ligase (476 aa).

125 to 131 (GTHGKTT) lines the ATP pocket.

Belongs to the MurCDEF family.

It is found in the cytoplasm. It catalyses the reaction UDP-N-acetyl-alpha-D-muramate + L-alanine + ATP = UDP-N-acetyl-alpha-D-muramoyl-L-alanine + ADP + phosphate + H(+). It participates in cell wall biogenesis; peptidoglycan biosynthesis. Its function is as follows. Cell wall formation. This Histophilus somni (strain 129Pt) (Haemophilus somnus) protein is UDP-N-acetylmuramate--L-alanine ligase.